An 856-amino-acid chain; its full sequence is MKPRPAGFVDNKLKQRVIQYLTSNKCGKYVDIGVLASDLQRVYSIDYGRRKRNAFRIQVEKVFSIISSEKELKNLTELEDEHLAKRARQGEEDNEYTESYSDDDSSMEDYPDPQSANHMNSSLLSLYRKGNPDSVSNTPEMEQRETTSSTPRISSKTGSIPLKTPAKDSEGGWFIDKTPSVKKDSFFLDLSCEKSNPKKPITEIQDSKDSSLLESDMKRKGKLKNKGSKRKKEDLQEVDGEIEAVLQKKAKARGLEFQISNVKFEDVGGNDMTLKEVCKMLIHMRHPEVYHHLGVVPPRGVLLHGPPGCGKTLLAHAIAGELDLPILKVAAPEIVSGVSGESEQKLRELFEQAVSNAPCIIFIDEIDAITPKREVASKDMERRIVAQLLTCMDDLNNVAATARVLVIGATNRPDSLDPALRRAGRFDREICLGIPDEASRERILQTLCRKLRLPQAFDFCHLAHLTPGFVGADLMALCREAAMCAVNRVLMKLQEQQKKNPEMEDLPSKGVQEERLGTEPTSETQDELQRLLGLLRDQDPLSEEQMQGLCIELNDFIVALSSVQPSAKREGFVTVPNVTWADIGALEDIREELTMAILAPVRNPDQFKALGLVTPAGVLLAGPPGCGKTLLAKAVANESGLNFISVKGPELLNMYVGESERAVRQVFQRAKNSAPCVIFFDEVDALCPRRSDRETGASVRVVNQLLTEMDGLEARQQVFIMAATNRPDIIDPAILRPGRLDKTLFVGLPPPADRLAILKTITKNGTKPPLDADVNLEAIAGDLRCDCYTGADLSALVREASICALRQEMARQKSGNEKGELKVSHKHFEEAFKKVRSSISKKDQIMYERLQESLSR.

The segment at 1–220 is interaction with RPL5; it reads MKPRPAGFVD…SLLESDMKRK (220 aa). Residues 49–52 carry the Nucleolar localization signal motif; sequence RRKR. An N6-acetyllysine modification is found at Lys70. Residues 84–175 are disordered; the sequence is AKRARQGEED…AKDSEGGWFI (92 aa). Residues 85–88 carry the Nuclear localization signal motif; sequence KRAR. Acidic residues predominate over residues 92-111; that stretch reads EDNEYTESYSDDDSSMEDYP. Composition is skewed to polar residues over residues 114–124 and 133–158; these read QSANHMNSSLL and DSVS…SKTG. At Ser134 the chain carries Phosphoserine. Thr138 is subject to Phosphothreonine. Lys156 is subject to N6-acetyllysine. At Ser191 the chain carries Phosphoserine. Residues 197–236 are disordered; the sequence is PKKPITEIQDSKDSSLLESDMKRKGKLKNKGSKRKKEDLQ. Positions 205–218 are enriched in basic and acidic residues; it reads QDSKDSSLLESDMK. Lys208 is covalently cross-linked (Glycyl lysine isopeptide (Lys-Gly) (interchain with G-Cter in SUMO2)). Phosphoserine occurs at positions 211 and 215. Residues 218-232 carry the Nuclear localization signal motif; that stretch reads KRKGKLKNKGSKRKK. A compositionally biased stretch (basic residues) spans 219–230; it reads RKGKLKNKGSKR. An interaction with WDR74 region spans residues 267–474; sequence VGGNDMTLKE…LTPGFVGADL (208 aa). 305–312 serves as a coordination point for ATP; sequence GPPGCGKT. The tract at residues 496 to 523 is disordered; the sequence is QQKKNPEMEDLPSKGVQEERLGTEPTSE. Residue 622 to 629 coordinates ATP; sequence GPPGCGKT.

This sequence belongs to the AAA ATPase family. As to quaternary structure, interacts with NCL/nucleolin. Isoform 1 and isoform 2 interact with TERT and isoform 1 exhibits a higher binding affinity for TERT compared to isoform 2. Isoform 1 interacts with MTREX in an ATP-dependent manner; the interaction is required to associate NVL with nuclear RNA exosome. Isoform 1 interacts with RPL5 in an ATP-dependent manner. Interacts with WDR74 (through WDR repeats); the interaction is independent of RNA or pre-60S ribosome particles. Widely expressed. Highest level of expression in heart, placenta, skeletal muscle, pancreas and retina.

The protein localises to the nucleus. The protein resides in the nucleoplasm. It localises to the nucleolus. In terms of biological role, participates in the assembly of the telomerase holoenzyme and effecting of telomerase activity via its interaction with TERT. Involved in both early and late stages of the pre-rRNA processing pathways. Spatiotemporally regulates 60S ribosomal subunit biogenesis in the nucleolus. Catalyzes the release of specific assembly factors, such as WDR74, from pre-60S ribosomal particles through the ATPase activity. The chain is Nuclear valosin-containing protein-like from Homo sapiens (Human).